A 111-amino-acid polypeptide reads, in one-letter code: ATP-dependent Clp protease adapter protein ClpS (111 aa).

This sequence belongs to the ClpS family. Binds to the N-terminal domain of the chaperone ClpA.

Involved in the modulation of the specificity of the ClpAP-mediated ATP-dependent protein degradation. The sequence is that of ATP-dependent Clp protease adapter protein ClpS from Corynebacterium aurimucosum (strain ATCC 700975 / DSM 44827 / CIP 107346 / CN-1) (Corynebacterium nigricans).